The chain runs to 453 residues: UDP-N-acetylmuramoylalanine--D-glutamate ligase (453 aa).

G115–T121 contributes to the ATP binding site.

Belongs to the MurCDEF family.

It localises to the cytoplasm. The catalysed reaction is UDP-N-acetyl-alpha-D-muramoyl-L-alanine + D-glutamate + ATP = UDP-N-acetyl-alpha-D-muramoyl-L-alanyl-D-glutamate + ADP + phosphate + H(+). It functions in the pathway cell wall biogenesis; peptidoglycan biosynthesis. In terms of biological role, cell wall formation. Catalyzes the addition of glutamate to the nucleotide precursor UDP-N-acetylmuramoyl-L-alanine (UMA). In Koribacter versatilis (strain Ellin345), this protein is UDP-N-acetylmuramoylalanine--D-glutamate ligase.